We begin with the raw amino-acid sequence, 349 residues long: Ferredoxin--NADP reductase 1 (349 aa).

Positions 36, 44, 48, 88, 123, 290, and 331 each coordinate FAD.

It belongs to the ferredoxin--NADP reductase type 2 family. Homodimer. FAD serves as cofactor.

The enzyme catalyses 2 reduced [2Fe-2S]-[ferredoxin] + NADP(+) + H(+) = 2 oxidized [2Fe-2S]-[ferredoxin] + NADPH. The chain is Ferredoxin--NADP reductase 1 from Lysinibacillus sphaericus (strain C3-41).